The chain runs to 864 residues: Leucine--tRNA ligase (864 aa).

A 'HIGH' region motif is present at residues 42-52 (PYPSGKLHMGH). The 'KMSKS' region signature appears at 624 to 628 (KMSKS). ATP is bound at residue K627.

Belongs to the class-I aminoacyl-tRNA synthetase family.

Its subcellular location is the cytoplasm. The catalysed reaction is tRNA(Leu) + L-leucine + ATP = L-leucyl-tRNA(Leu) + AMP + diphosphate. This is Leucine--tRNA ligase from Burkholderia pseudomallei (strain 1710b).